Here is an 80-residue protein sequence, read N- to C-terminus: MEDLLGLLLSETGLLAIIYLGLSLAYLLVFPALLYWYLQKRWYVASSVERLVMYFLVFLFFPGLLVLSPVLNLRPRRQAA.

The next 2 membrane-spanning stretches (helical) occupy residues 14–34 and 51–71; these read LLAIIYLGLSLAYLLVFPALL and LVMYFLVFLFFPGLLVLSPVL.

It belongs to the complex I NdhL subunit family. In terms of assembly, NDH-1 can be composed of about 15 different subunits; different subcomplexes with different compositions have been identified which probably have different functions.

Its subcellular location is the cellular thylakoid membrane. It catalyses the reaction a plastoquinone + NADH + (n+1) H(+)(in) = a plastoquinol + NAD(+) + n H(+)(out). The catalysed reaction is a plastoquinone + NADPH + (n+1) H(+)(in) = a plastoquinol + NADP(+) + n H(+)(out). Its function is as follows. NDH-1 shuttles electrons from an unknown electron donor, via FMN and iron-sulfur (Fe-S) centers, to quinones in the respiratory and/or the photosynthetic chain. The immediate electron acceptor for the enzyme in this species is believed to be plastoquinone. Couples the redox reaction to proton translocation, and thus conserves the redox energy in a proton gradient. Cyanobacterial NDH-1 also plays a role in inorganic carbon-concentration. In Synechocystis sp. (strain ATCC 27184 / PCC 6803 / Kazusa), this protein is NAD(P)H-quinone oxidoreductase subunit L (ndhL).